Reading from the N-terminus, the 226-residue chain is Urease accessory protein UreF (226 aa).

Belongs to the UreF family. In terms of assembly, ureD, UreF and UreG form a complex that acts as a GTP-hydrolysis-dependent molecular chaperone, activating the urease apoprotein by helping to assemble the nickel containing metallocenter of UreC. The UreE protein probably delivers the nickel.

The protein resides in the cytoplasm. Required for maturation of urease via the functional incorporation of the urease nickel metallocenter. The chain is Urease accessory protein UreF from Burkholderia cenocepacia (strain ATCC BAA-245 / DSM 16553 / LMG 16656 / NCTC 13227 / J2315 / CF5610) (Burkholderia cepacia (strain J2315)).